The chain runs to 80 residues: Acyl carrier protein (80 aa).

Positions 2–77 (KNIEERIKKI…KSIDFIQNKN (76 aa)) constitute a Carrier domain. An O-(pantetheine 4'-phosphoryl)serine modification is found at S37.

It belongs to the acyl carrier protein (ACP) family. Post-translationally, 4'-phosphopantetheine is transferred from CoA to a specific serine of apo-ACP by AcpS. This modification is essential for activity because fatty acids are bound in thioester linkage to the sulfhydryl of the prosthetic group.

Its subcellular location is the cytoplasm. Its pathway is lipid metabolism; fatty acid biosynthesis. Functionally, carrier of the growing fatty acid chain in fatty acid biosynthesis. The protein is Acyl carrier protein of Buchnera aphidicola subsp. Acyrthosiphon pisum (strain 5A).